The chain runs to 889 residues: Exocyst complex component 1 (889 aa).

Serine 145 and serine 148 each carry phosphoserine. The stretch at 156 to 269 (RAVQKTQHMD…GHVKETMEKI (114 aa)) forms a coiled coil. Serine 456 is modified (phosphoserine).

The protein belongs to the SEC3 family. In terms of assembly, the exocyst complex is composed of Sec3/Exoc1, Sec5/Exoc2, Sec6/Exoc3, Sec8/Exoc4, Sec10/Exoc5, Sec15/Exoc6, Exo70/Exoc7 and Exo84/Exoc8.

Its function is as follows. Component of the exocyst complex involved in the docking of exocytic vesicles with fusion sites on the plasma membrane. This is Exocyst complex component 1 from Drosophila melanogaster (Fruit fly).